Reading from the N-terminus, the 595-residue chain is Probable L-gulonolactone oxidase 1 (595 aa).

A signal peptide spans 1–18 (MAFWLSLIFFCFCTFASS). The 183-residue stretch at 47-229 (SICEAAKVEY…SQVTFQLQPM (183 aa)) folds into the FAD-binding PCMH-type domain.

Belongs to the oxygen-dependent FAD-linked oxidoreductase family. FAD is required as a cofactor.

The catalysed reaction is L-gulono-1,4-lactone + O2 = L-ascorbate + H2O2 + H(+). It participates in cofactor biosynthesis; L-ascorbate biosynthesis. Its function is as follows. May be involved in the biosynthesis of ascorbic acid. The chain is Probable L-gulonolactone oxidase 1 from Arabidopsis thaliana (Mouse-ear cress).